Reading from the N-terminus, the 292-residue chain is Coiled-coil domain-containing protein 192 (292 aa).

A disordered region spans residues 28 to 55; that stretch reads SVVPESDTSERSSMTSGSSESDIPQENK. The segment covering 38-49 has biased composition (low complexity); sequence RSSMTSGSSESD. Coiled-coil stretches lie at residues 65 to 174 and 222 to 258; these read QMAF…LATA and IMEL…AERS. Residues 251-267 show a composition bias toward basic and acidic residues; it reads QQLEAERSPHPPQEVKD. The tract at residues 251–292 is disordered; that stretch reads QQLEAERSPHPPQEVKDPPGCLPEAPVFSTHDIPPVVSDENL.

This Homo sapiens (Human) protein is Coiled-coil domain-containing protein 192.